A 325-amino-acid chain; its full sequence is DNA-directed RNA polymerase subunit alpha (325 aa).

Residues 1–231 (MQTSLLKPKI…DQLSVFAALE (231 aa)) form an alpha N-terminal domain (alpha-NTD) region. The alpha C-terminal domain (alpha-CTD) stretch occupies residues 246-325 (IDPILLRPVD…ENWPPAGLDK (80 aa)).

Belongs to the RNA polymerase alpha chain family. Homodimer. The RNAP catalytic core consists of 2 alpha, 1 beta, 1 beta' and 1 omega subunit. When a sigma factor is associated with the core the holoenzyme is formed, which can initiate transcription.

It carries out the reaction RNA(n) + a ribonucleoside 5'-triphosphate = RNA(n+1) + diphosphate. In terms of biological role, DNA-dependent RNA polymerase catalyzes the transcription of DNA into RNA using the four ribonucleoside triphosphates as substrates. The polypeptide is DNA-directed RNA polymerase subunit alpha (Burkholderia thailandensis (strain ATCC 700388 / DSM 13276 / CCUG 48851 / CIP 106301 / E264)).